A 275-amino-acid polypeptide reads, in one-letter code: Large ribosomal subunit protein uL2c (275 aa).

Positions 225-252 (MNPCDHPHGGGEGRSPIGRAKPVTPWGK) are disordered.

It belongs to the universal ribosomal protein uL2 family. In terms of assembly, part of the 50S ribosomal subunit.

It localises to the plastid. The protein localises to the chloroplast. The chain is Large ribosomal subunit protein uL2c (rpl2) from Guillardia theta (Cryptophyte).